Here is a 210-residue protein sequence, read N- to C-terminus: MTTKGILGKKVGMTQVFTEAGELIPVTVIDTTPNVVLQLKTVENDGYSSVQLGFDDKRQVLSNKPEQGHVAKANTNPKRFIHEIRNVELGDVKVGDTIAADIFEAGEIVDVTGTTKGHGFQGVIKKDGQRRGPMAHGSRYHRRPGSLGAVINRVFPGKKLPGRMGNKTVTIQHLEIVKADTENNVLLVKGNVPGAKKSYLVVKSTVKNTK.

This sequence belongs to the universal ribosomal protein uL3 family. Part of the 50S ribosomal subunit. Forms a cluster with proteins L14 and L19.

Functionally, one of the primary rRNA binding proteins, it binds directly near the 3'-end of the 23S rRNA, where it nucleates assembly of the 50S subunit. The protein is Large ribosomal subunit protein uL3 of Pediococcus pentosaceus (strain ATCC 25745 / CCUG 21536 / LMG 10740 / 183-1w).